The sequence spans 408 residues: tRNA-specific 2-thiouridylase MnmA (408 aa).

Residues Gly-38–Ser-45 and Met-64 contribute to the ATP site. Positions Asn-124–Asp-126 are interaction with target base in tRNA. Residue Cys-129 is the Nucleophile of the active site. Cys-129 and Cys-231 are disulfide-bonded. Gly-153 contributes to the ATP binding site. An interaction with tRNA region spans residues Lys-181 to Gln-183. Cys-231 (cysteine persulfide intermediate) is an active-site residue. The segment at Arg-348 to Tyr-349 is interaction with tRNA.

It belongs to the MnmA/TRMU family.

The protein localises to the cytoplasm. The catalysed reaction is S-sulfanyl-L-cysteinyl-[protein] + uridine(34) in tRNA + AH2 + ATP = 2-thiouridine(34) in tRNA + L-cysteinyl-[protein] + A + AMP + diphosphate + H(+). In terms of biological role, catalyzes the 2-thiolation of uridine at the wobble position (U34) of tRNA, leading to the formation of s(2)U34. The polypeptide is tRNA-specific 2-thiouridylase MnmA (Psychrobacter arcticus (strain DSM 17307 / VKM B-2377 / 273-4)).